The primary structure comprises 291 residues: Ribosomal RNA small subunit methyltransferase H (291 aa).

S-adenosyl-L-methionine is bound by residues 36–38 (GGH), aspartate 55, alanine 90, aspartate 102, and glutamine 109.

Belongs to the methyltransferase superfamily. RsmH family.

The protein localises to the cytoplasm. It catalyses the reaction cytidine(1402) in 16S rRNA + S-adenosyl-L-methionine = N(4)-methylcytidine(1402) in 16S rRNA + S-adenosyl-L-homocysteine + H(+). Its function is as follows. Specifically methylates the N4 position of cytidine in position 1402 (C1402) of 16S rRNA. The polypeptide is Ribosomal RNA small subunit methyltransferase H (Thermosipho africanus (strain TCF52B)).